We begin with the raw amino-acid sequence, 509 residues long: GMP synthase [glutamine-hydrolyzing] (509 aa).

Residues 4-193 form the Glutamine amidotransferase type-1 domain; it reads NVLILDFGSQ…LIKIAGTKAT (190 aa). The active-site Nucleophile is C79. Active-site residues include H167 and E169. The 191-residue stretch at 194–384 folds into the GMPS ATP-PPase domain; the sequence is WTPGKFVDLT…LGIDKELLGR (191 aa). 221–227 serves as a coordination point for ATP; sequence SGGVDST.

In terms of assembly, homodimer.

It catalyses the reaction XMP + L-glutamine + ATP + H2O = GMP + L-glutamate + AMP + diphosphate + 2 H(+). Its pathway is purine metabolism; GMP biosynthesis; GMP from XMP (L-Gln route): step 1/1. Functionally, catalyzes the synthesis of GMP from XMP. This Christiangramia forsetii (strain DSM 17595 / CGMCC 1.15422 / KT0803) (Gramella forsetii) protein is GMP synthase [glutamine-hydrolyzing].